The following is a 132-amino-acid chain: MADFVGSWKLEHSENMDGVWKALGVPSDMVDKARNEKPEFTFELEGNKMTIKMVSSLKTKTTTFTFGEEFKDETFDNRTVMSTVTKDSENKITQVQKGPEHTTHIVREVTGDKMVITITVGDVKAVNTLRKM.

Residue A2 is modified to N-acetylalanine.

The protein belongs to the calycin superfamily. Fatty-acid binding protein (FABP) family.

This chain is Fatty acid-binding protein type 2, found in Fasciola hepatica (Liver fluke).